A 229-amino-acid polypeptide reads, in one-letter code: Ferric nitrobindin-like protein (229 aa).

Residues 1–54 (MSENSTPNNPVVPGAGADGPSLSDSASISGSDAVNLAAEQSKSTAHRNIPGLGD) are disordered. Over residues 18-33 (DGPSLSDSASISGSDA) the composition is skewed to low complexity. The short motif at 82 to 88 (GVWRGEG) is the GXWXGXG element.

It belongs to the nitrobindin family.

In Corynebacterium glutamicum (strain R), this protein is Ferric nitrobindin-like protein.